Here is a 349-residue protein sequence, read N- to C-terminus: Thiamine-phosphate synthase (349 aa).

Positions 1–125 (MGCESSLDPR…SAEAAAIRYG (125 aa)) are unknown. Residues 63–85 (RARSTVTDPGAGMEHPAQLDRHS) are disordered. The tract at residues 126 to 349 (LYDLEVTCLT…LLSSLSRPTL (224 aa)) is thiamine-phosphate synthase. 4-amino-2-methyl-5-(diphosphooxymethyl)pyrimidine-binding positions include 177 to 181 (QHRCK) and asparagine 209. 2 residues coordinate Mg(2+): aspartate 210 and aspartate 229. 2 residues coordinate 4-amino-2-methyl-5-(diphosphooxymethyl)pyrimidine: serine 248 and lysine 277. Residue glycine 304 participates in 2-[(2R,5Z)-2-carboxy-4-methylthiazol-5(2H)-ylidene]ethyl phosphate binding.

It belongs to the thiamine-phosphate synthase family. Mg(2+) is required as a cofactor.

It catalyses the reaction 2-[(2R,5Z)-2-carboxy-4-methylthiazol-5(2H)-ylidene]ethyl phosphate + 4-amino-2-methyl-5-(diphosphooxymethyl)pyrimidine + 2 H(+) = thiamine phosphate + CO2 + diphosphate. It carries out the reaction 2-(2-carboxy-4-methylthiazol-5-yl)ethyl phosphate + 4-amino-2-methyl-5-(diphosphooxymethyl)pyrimidine + 2 H(+) = thiamine phosphate + CO2 + diphosphate. The catalysed reaction is 4-methyl-5-(2-phosphooxyethyl)-thiazole + 4-amino-2-methyl-5-(diphosphooxymethyl)pyrimidine + H(+) = thiamine phosphate + diphosphate. It functions in the pathway cofactor biosynthesis; thiamine diphosphate biosynthesis; thiamine phosphate from 4-amino-2-methyl-5-diphosphomethylpyrimidine and 4-methyl-5-(2-phosphoethyl)-thiazole: step 1/1. Functionally, condenses 4-methyl-5-(beta-hydroxyethyl)thiazole monophosphate (THZ-P) and 2-methyl-4-amino-5-hydroxymethyl pyrimidine pyrophosphate (HMP-PP) to form thiamine monophosphate (TMP). The polypeptide is Thiamine-phosphate synthase (Parasynechococcus marenigrum (strain WH8102)).